Consider the following 78-residue polypeptide: Large ribosomal subunit protein bL28 (78 aa).

It belongs to the bacterial ribosomal protein bL28 family.

This is Large ribosomal subunit protein bL28 from Prochlorococcus marinus (strain MIT 9515).